The following is a 204-amino-acid chain: Capsid protein (204 aa).

Positions 183-194 (EFSSESPVTSLK) are enriched in polar residues. Positions 183 to 204 (EFSSESPVTSLKQLGRGLGTGR) are disordered.

It belongs to the closteroviridae capsid protein family.

The protein localises to the virion. Its function is as follows. Component that constitutes the body part of the virion. Also acts as a movement protein that is involved in local cell-cell movement via plamodesmata. At least five viral proteins, CP, CPm, p6, p64 and Hsp70h are essential for cell-cell movement. In Beet yellows virus (isolate Ukraine) (BYV), this protein is Capsid protein.